A 335-amino-acid polypeptide reads, in one-letter code: Cell division protein ZipA (335 aa).

At 1–4 (MDLN) the chain is on the periplasmic side. Residues 5-25 (AILIILGVIALIILVAHGIWS) form a helical membrane-spanning segment. At 26–335 (NRCEKSQYFE…AERDYLARVS (310 aa)) the chain is on the cytoplasmic side.

The protein belongs to the ZipA family. In terms of assembly, interacts with FtsZ via their C-terminal domains.

Its subcellular location is the cell inner membrane. Its function is as follows. Essential cell division protein that stabilizes the FtsZ protofilaments by cross-linking them and that serves as a cytoplasmic membrane anchor for the Z ring. Also required for the recruitment to the septal ring of downstream cell division proteins. This is Cell division protein ZipA from Histophilus somni (strain 129Pt) (Haemophilus somnus).